The chain runs to 600 residues: 1-deoxy-D-xylulose-5-phosphate synthase (600 aa).

Thiamine diphosphate is bound by residues H57 and 98-100; that span reads GHA. D125 is a Mg(2+) binding site. Thiamine diphosphate contacts are provided by residues 126–127, N155, Y264, and E343; that span reads AS. N155 serves as a coordination point for Mg(2+).

This sequence belongs to the transketolase family. DXPS subfamily. As to quaternary structure, homodimer. Mg(2+) is required as a cofactor. Requires thiamine diphosphate as cofactor.

It catalyses the reaction D-glyceraldehyde 3-phosphate + pyruvate + H(+) = 1-deoxy-D-xylulose 5-phosphate + CO2. It functions in the pathway metabolic intermediate biosynthesis; 1-deoxy-D-xylulose 5-phosphate biosynthesis; 1-deoxy-D-xylulose 5-phosphate from D-glyceraldehyde 3-phosphate and pyruvate: step 1/1. In terms of biological role, catalyzes the acyloin condensation reaction between C atoms 2 and 3 of pyruvate and glyceraldehyde 3-phosphate to yield 1-deoxy-D-xylulose-5-phosphate (DXP). The protein is 1-deoxy-D-xylulose-5-phosphate synthase of Fusobacterium nucleatum subsp. nucleatum (strain ATCC 25586 / DSM 15643 / BCRC 10681 / CIP 101130 / JCM 8532 / KCTC 2640 / LMG 13131 / VPI 4355).